Here is a 67-residue protein sequence, read N- to C-terminus: Large ribosomal subunit protein bL28 (67 aa).

This sequence belongs to the bacterial ribosomal protein bL28 family.

This is Large ribosomal subunit protein bL28 from Nitratiruptor sp. (strain SB155-2).